The following is a 356-amino-acid chain: Peptide chain release factor 1 (356 aa).

Gln-234 carries the N5-methylglutamine modification.

Belongs to the prokaryotic/mitochondrial release factor family. Post-translationally, methylated by PrmC. Methylation increases the termination efficiency of RF1.

It localises to the cytoplasm. Its function is as follows. Peptide chain release factor 1 directs the termination of translation in response to the peptide chain termination codons UAG and UAA. This Parafrankia sp. (strain EAN1pec) protein is Peptide chain release factor 1.